Reading from the N-terminus, the 1227-residue chain is MGDTSEDASIHRLEGTDLDCQVGGLICKSKSAASEQHVFKAPAPRPSLLGLDLLASLKRREREEKDDGEDKKKSKVSSYKDWEESKDDQKDAEEEGGDQAGQNIRKDRHYRSARVETPSHPGGVSEEFWERSRQRERERREHGVYASSKEEKDWKKEKSRDRDYDRKRDRDERDRSRHSSRSERDGGSERSSRRNEPESPRHRPKDAATPSRSTWEEEDSGYGSSRRSQWESPSPTPSYRDSERSHRLSTRDRDRSVRGKYSDDTPLPTPSYKYNEWADDRRHLGSTPRLSRGRGRREEGEEGISFDTEEERQQWEDDQRQADRDWYMMDEGYDEFHNPLAYSSEDYVRRREQHLHKQKQKRISAQRRQINEDNERWETNRMLTSGVVHRLEVDEDFEEDNAAKVHLMVHNLVPPFLDGRIVFTKQPEPVIPVKDATSDLAIIARKGSQTVRKHREQKERKKAQHKHWELAGTKLGDIMGVKKEEEPDKAVTEDGKVDYRTEQKFADHMKRKSEASSEFAKKKSILEQRQYLPIFAVQQELLTIIRDNSIVIVVGETGSGKTTQLTQYLHEDGYTDYGMIGCTQPRRVAAMSVAKRVSEEMGGNLGEEVGYAIRFEDCTSENTLIKYMTDGILLRESLREADLDHYSAIIMDEAHERSLNTDVLFGLLREVVARRSDLKLIVTSATMDAEKFAAFFGNVPIFHIPGRTFPVDILFSKTPQEDYVEAAVKQSLQVHLSGAPGDILIFMPGQEDIEVTSDQIVEHLEELENAPALAVLPIYSQLPSDLQAKIFQKAPDGVRKCIVATNIAETSLTVDGIMFVIDSGYCKLKVFNPRIGMDALQIYPISQANANQRSGRAGRTGPGQCFRLYTQSAYKNELLTTTVPEIQRTNLANVVLLLKSLGVQDLLQFHFMDPPPEDNMLNSMYQLWILGALDNTGGLTSTGRLMVEFPLDPALSKMLIVSCDMGCSSEILLIVSMLSVPAIFYRPKGREEESDQIREKFAVPESDHLTYLNVYLQWKNNNYSTIWCNDHFIHAKAMRKVREVRAQLKDIMVQQRMSLASCGTDWDIVRKCICAAYFHQAAKLKGIGEYVNIRTGMPCHLHPTSSLFGMGYTPDYIVYHELVMTTKEYMQCVTAVDGEWLAELGPMFYSVKQAGKSRQENRRRAKEEASAMEEEMALAEEQLRARRQEQEKRSPLGSVRSTKIYTPGRKEQGEPMTPRRTPARFGL.

N-acetylglycine is present on Gly2. Phosphoserine is present on Ser56. Residues 60 to 89 (REREEKDDGEDKKKSKVSSYKDWEESKDDQ) show a composition bias toward basic and acidic residues. Residues 60–320 (REREEKDDGE…ERQQWEDDQR (261 aa)) form a disordered region. Thr117 bears the Phosphothreonine mark. Residues 128–201 (FWERSRQRER…SRRNEPESPR (74 aa)) are compositionally biased toward basic and acidic residues. A phosphoserine mark is found at Ser199 and Ser224. Residues 222 to 239 (YGSSRRSQWESPSPTPSY) are compositionally biased toward polar residues. Over residues 240-263 (RDSERSHRLSTRDRDRSVRGKYSD) the composition is skewed to basic and acidic residues. Lys260 carries the N6-acetyllysine modification. A compositionally biased stretch (acidic residues) spans 300-310 (GEEGISFDTEE). The span at 311–320 (ERQQWEDDQR) shows a compositional bias: basic and acidic residues. Glycyl lysine isopeptide (Lys-Gly) (interchain with G-Cter in SUMO2) cross-links involve residues Lys482, Lys483, and Lys504. Positions 542-705 (LTIIRDNSIV…FGNVPIFHIP (164 aa)) constitute a Helicase ATP-binding domain. Position 555–562 (555–562 (GETGSGKT)) interacts with ATP. The short motif at 652-655 (DEAH) is the DEAH box element. Residues 727-902 (AVKQSLQVHL…NVVLLLKSLG (176 aa)) form the Helicase C-terminal domain. The interval 1155 to 1227 (GKSRQENRRR…PRRTPARFGL (73 aa)) is disordered. Basic and acidic residues-rich tracts occupy residues 1157-1169 (SRQE…KEEA) and 1181-1194 (EQLR…EKRS). A Glycyl lysine isopeptide (Lys-Gly) (interchain with G-Cter in SUMO2) cross-link involves residue Lys1166. The residue at position 1194 (Ser1194) is a Phosphoserine.

It belongs to the DEAD box helicase family. DEAH subfamily. PRP16 sub-subfamily. In terms of assembly, identified in the spliceosome C complex.

It localises to the nucleus. It carries out the reaction ATP + H2O = ADP + phosphate + H(+). In terms of biological role, probable ATP-binding RNA helicase. Involved in pre-mRNA splicing as component of the spliceosome. The polypeptide is Pre-mRNA-splicing factor ATP-dependent RNA helicase PRP16 (DHX38) (Homo sapiens (Human)).